A 100-amino-acid polypeptide reads, in one-letter code: MAKKSVIQRNINRLKLINKYSAQREAIKNEIKRTSKVEKKISLYSNISRLPRDSSKVRLRSRCWVTGRGRSVYKNFGLSRHMFRFMASNGLLPGVVKSSW.

Belongs to the universal ribosomal protein uS14 family. Part of the 30S ribosomal subunit.

It localises to the plastid. The protein resides in the chloroplast. Binds 16S rRNA, required for the assembly of 30S particles. The sequence is that of Small ribosomal subunit protein uS14c from Cyanidium caldarium (Red alga).